A 3258-amino-acid polypeptide reads, in one-letter code: Protein unc-80 homolog (3258 aa).

The interval 152-173 is disordered; sequence VENQGSPGQPCQSSSNDEEENN. The segment covering 155 to 166 has biased composition (low complexity); the sequence is QGSPGQPCQSSS. Ser-257 carries the post-translational modification Phosphoserine. 9 disordered regions span residues 291 to 316, 449 to 468, 522 to 560, 697 to 717, 732 to 784, 963 to 1019, 1034 to 1076, 1404 to 1447, and 1817 to 1836; these read RGNSFDGSLSSQTSQERGPSHSRASL, RKEDRERKGSIPFHHTGKRR, RRGSSDAATEMESLSARHSHSHHTLVSDLPDPSNSHGEN, KKSENKENETLEKRPSEGAFQ, PAVS…TPVS, PGKK…EQMQ, KSQS…ISLR, EDSK…MSNA, and AVSAEDEEHTTEHTPNHHVP. A compositionally biased stretch (polar residues) spans 295 to 307; it reads FDGSLSSQTSQER. Phosphoserine is present on Ser-525. The span at 698–712 shows a compositional bias: basic and acidic residues; it reads KSENKENETLEKRPS. Gly residues predominate over residues 732–767; that stretch reads PAVSGAGDGGGEEGGGGDGGGGGGDGGGGGGGGGGP. Basic and acidic residues-rich tracts occupy residues 769 to 780 and 965 to 974; these read EKNDKNQEKDES and KKVEENEQES. Residues 1035 to 1052 show a composition bias toward low complexity; sequence SQSAASDTSSQSEQDTSE. Over residues 1066-1076 the composition is skewed to basic residues; that stretch reads ARSRSRRISLR. Residues 1417 to 1429 show a composition bias toward basic and acidic residues; that stretch reads LKSDAGVEEKKEG. 4 consecutive transmembrane segments (helical) span residues 2268-2288, 2398-2418, 2785-2805, and 2831-2851; these read PFVLQLFASVAPLLEFPDAAN, IAATAALATSLQALLYSVEVL, GLAESTSQAAYLALKVILVCF, and LALWDFLDFIVRTRIPIFVLL. The span at 2942 to 2964 shows a compositional bias: polar residues; that stretch reads NTGTGTVWEQDSEPSQQASQDTL. Positions 2942–2982 are disordered; the sequence is NTGTGTVWEQDSEPSQQASQDTLSRTDEEDEENDSISMPSV. Residue Ser-3042 is modified to Phosphoserine. The tract at residues 3051–3213 is disordered; it reads NLLVQQPLGR…DDFTGLETSS (163 aa). The span at 3059-3068 shows a compositional bias: basic residues; that stretch reads GRKRGLRQLR. The span at 3088 to 3100 shows a compositional bias: polar residues; it reads RLSTTRRSIQPKT. Low complexity predominate over residues 3117 to 3129; that stretch reads PEPAAAPTDALPA. Acidic residues predominate over residues 3175–3186; that stretch reads PTEEGEKEEDTE.

This sequence belongs to the unc-80 family. In terms of assembly, NALCN complex consists of NALCN and auxiliary subunits, UNC79, UNC80 and NACL1. These auxiliary subunits are essential for the NALCN complex function. Interacts (via N-terminus half) with NALCN; this interaction facilitates NALCN surface localization. Interacts with UNC79. UNC80 bridges NALCN to UNC79. Post-translationally, phosphorylated on tyrosine residues. Moderately expressed in fetal brain, spinal cord, skeletal muscle, thymus, spleen, fetal liver, small intestine, colon, kidney and uterus. Highly expressed in adrenal gland, prostate and testis, as well as in brain and cerebellum.

It is found in the cell membrane. In terms of biological role, auxiliary subunit of the NALCN sodium channel complex, a voltage-gated ion channel responsible for the resting Na(+) permeability that controls neuronal excitability. Activated by neuropeptides substance P, neurotensin, and extracellular Ca(2+) that regulates neuronal excitability by controlling the sizes of NALCN-dependent sodium-leak current. UNC80 is essential for NALCN sensitivity to extracellular Ca(2+). In Homo sapiens (Human), this protein is Protein unc-80 homolog.